Consider the following 89-residue polypeptide: Small ribosomal subunit protein uS15 (89 aa).

This sequence belongs to the universal ribosomal protein uS15 family. In terms of assembly, part of the 30S ribosomal subunit. Forms a bridge to the 50S subunit in the 70S ribosome, contacting the 23S rRNA.

Functionally, one of the primary rRNA binding proteins, it binds directly to 16S rRNA where it helps nucleate assembly of the platform of the 30S subunit by binding and bridging several RNA helices of the 16S rRNA. In terms of biological role, forms an intersubunit bridge (bridge B4) with the 23S rRNA of the 50S subunit in the ribosome. The polypeptide is Small ribosomal subunit protein uS15 (Frankia alni (strain DSM 45986 / CECT 9034 / ACN14a)).